A 110-amino-acid chain; its full sequence is Large ribosomal subunit protein uL22 (110 aa).

This sequence belongs to the universal ribosomal protein uL22 family. In terms of assembly, part of the 50S ribosomal subunit.

Its function is as follows. This protein binds specifically to 23S rRNA; its binding is stimulated by other ribosomal proteins, e.g. L4, L17, and L20. It is important during the early stages of 50S assembly. It makes multiple contacts with different domains of the 23S rRNA in the assembled 50S subunit and ribosome. The globular domain of the protein is located near the polypeptide exit tunnel on the outside of the subunit, while an extended beta-hairpin is found that lines the wall of the exit tunnel in the center of the 70S ribosome. This chain is Large ribosomal subunit protein uL22, found in Buchnera aphidicola subsp. Schizaphis graminum (strain Sg).